A 117-amino-acid polypeptide reads, in one-letter code: Immunoglobulin heavy variable 3-5 (117 aa).

An N-terminal signal peptide occupies residues 1 to 18; the sequence is MKMFTLLYLLTVVPGILS. In terms of domain architecture, Ig-like spans 19–117; it reads DVQLQESGPG…EDTATYYCAR (99 aa). The cysteines at positions 40 and 115 are disulfide-linked.

This chain is Immunoglobulin heavy variable 3-5, found in Mus musculus (Mouse).